We begin with the raw amino-acid sequence, 385 residues long: Nonsense-mediated mRNA decay factor SMG9 (385 aa).

A disordered region spans residues 1 to 32 (MKKVEILKTSRPSSAGGAARPSTASPTHGAPK).

It belongs to the SMG9 family.

In terms of biological role, involved in nonsense-mediated decay (NMD) of mRNAs containing premature stop codons. Probable component of kinase complex containing smg-1 and recruited to stalled ribosomes. This chain is Nonsense-mediated mRNA decay factor SMG9 (smg-9), found in Caenorhabditis elegans.